The sequence spans 620 residues: Glutathione-regulated potassium-efflux system protein KefC (620 aa).

12 consecutive transmembrane segments (helical) span residues His-4–Val-24, Leu-26–Leu-46, Ser-54–Leu-74, Gly-90–Leu-110, Val-114–Met-134, Phe-149–Leu-169, Leu-178–Leu-198, Val-218–Gly-238, Gly-270–Val-290, Leu-294–Val-314, Trp-327–Gln-347, and Ala-359–Thr-379. Residues Gln-399–Thr-518 form the RCK N-terminal domain. A disordered region spans residues Gln-599–Ile-620.

It belongs to the monovalent cation:proton antiporter 2 (CPA2) transporter (TC 2.A.37) family. KefC subfamily. Homodimer. Interacts with the regulatory subunit KefF.

Its subcellular location is the cell inner membrane. Pore-forming subunit of a potassium efflux system that confers protection against electrophiles. Catalyzes K(+)/H(+) antiport. The sequence is that of Glutathione-regulated potassium-efflux system protein KefC from Salmonella schwarzengrund (strain CVM19633).